The following is a 38-amino-acid chain: Large ribosomal subunit protein bL36 (38 aa).

It belongs to the bacterial ribosomal protein bL36 family.

This Saccharophagus degradans (strain 2-40 / ATCC 43961 / DSM 17024) protein is Large ribosomal subunit protein bL36.